Reading from the N-terminus, the 242-residue chain is Large ribosomal subunit protein uL1 (242 aa).

It belongs to the universal ribosomal protein uL1 family. As to quaternary structure, part of the 50S ribosomal subunit.

In terms of biological role, binds directly to 23S rRNA. The L1 stalk is quite mobile in the ribosome, and is involved in E site tRNA release. Protein L1 is also a translational repressor protein, it controls the translation of the L11 operon by binding to its mRNA. In Sulfurihydrogenibium sp. (strain YO3AOP1), this protein is Large ribosomal subunit protein uL1.